The following is a 141-amino-acid chain: Small ribosomal subunit protein uS12 (141 aa).

Asp-102 bears the 3-methylthioaspartic acid mark. Positions 115–141 are disordered; sequence GDASGVEKRRQQRSLYGAKRPKKEASK.

It belongs to the universal ribosomal protein uS12 family. As to quaternary structure, part of the 30S ribosomal subunit. Contacts proteins S8 and S17. May interact with IF1 in the 30S initiation complex.

In terms of biological role, with S4 and S5 plays an important role in translational accuracy. Functionally, interacts with and stabilizes bases of the 16S rRNA that are involved in tRNA selection in the A site and with the mRNA backbone. Located at the interface of the 30S and 50S subunits, it traverses the body of the 30S subunit contacting proteins on the other side and probably holding the rRNA structure together. The combined cluster of proteins S8, S12 and S17 appears to hold together the shoulder and platform of the 30S subunit. In Ureaplasma parvum serovar 3 (strain ATCC 27815 / 27 / NCTC 11736), this protein is Small ribosomal subunit protein uS12.